Reading from the N-terminus, the 90-residue chain is Putative antitoxin VapB8 (90 aa).

The disordered stretch occupies residues 1-56; sequence MEKSRCHAVAHGGGCAGSAKSHKSGGRCGQGRGAGDSHGTRGAGRRYRAASAPHPL. Residues 26–36 show a composition bias toward gly residues; it reads GRCGQGRGAGD.

Functionally, antitoxin component of a possible type II toxin-antitoxin (TA) system. The cognate toxin is VapC8. This Mycobacterium tuberculosis (strain ATCC 25618 / H37Rv) protein is Putative antitoxin VapB8 (vapB8).